We begin with the raw amino-acid sequence, 248 residues long: Probable phosphatase VFMJ11_A0091 (248 aa).

Positions 8, 10, 16, 41, 74, 102, 132, 194, and 196 each coordinate Zn(2+).

This sequence belongs to the PHP family. Zn(2+) is required as a cofactor.

The polypeptide is Probable phosphatase VFMJ11_A0091 (Aliivibrio fischeri (strain MJ11) (Vibrio fischeri)).